Here is a 1099-residue protein sequence, read N- to C-terminus: Carbamoyl phosphate synthase large chain (1099 aa).

The carboxyphosphate synthetic domain stretch occupies residues methionine 1–glutamate 402. Positions 129, 169, 175, 176, 208, 210, 215, 241, 242, 243, 285, and 299 each coordinate ATP. One can recognise an ATP-grasp 1 domain in the interval lysine 133–valine 328. Mg(2+) is bound by residues glutamine 285, glutamate 299, and asparagine 301. 3 residues coordinate Mn(2+): glutamine 285, glutamate 299, and asparagine 301. The oligomerization domain stretch occupies residues leucine 403–alanine 541. The tract at residues isoleucine 542–glycine 944 is carbamoyl phosphate synthetic domain. Positions alanine 666–valine 857 constitute an ATP-grasp 2 domain. The ATP site is built by arginine 702, lysine 741, leucine 743, glutamate 748, glycine 773, valine 774, histidine 775, serine 776, glutamine 816, and glutamate 828. Mg(2+) contacts are provided by glutamine 816, glutamate 828, and asparagine 830. Mn(2+)-binding residues include glutamine 816, glutamate 828, and asparagine 830. Residues asparagine 945–methionine 1099 form the MGS-like domain. The interval asparagine 945–methionine 1099 is allosteric domain.

It belongs to the CarB family. In terms of assembly, composed of two chains; the small (or glutamine) chain promotes the hydrolysis of glutamine to ammonia, which is used by the large (or ammonia) chain to synthesize carbamoyl phosphate. Tetramer of heterodimers (alpha,beta)4. Mg(2+) serves as cofactor. Requires Mn(2+) as cofactor.

It carries out the reaction hydrogencarbonate + L-glutamine + 2 ATP + H2O = carbamoyl phosphate + L-glutamate + 2 ADP + phosphate + 2 H(+). The catalysed reaction is hydrogencarbonate + NH4(+) + 2 ATP = carbamoyl phosphate + 2 ADP + phosphate + 2 H(+). Its pathway is amino-acid biosynthesis; L-arginine biosynthesis; carbamoyl phosphate from bicarbonate: step 1/1. It functions in the pathway pyrimidine metabolism; UMP biosynthesis via de novo pathway; (S)-dihydroorotate from bicarbonate: step 1/3. Functionally, large subunit of the glutamine-dependent carbamoyl phosphate synthetase (CPSase). CPSase catalyzes the formation of carbamoyl phosphate from the ammonia moiety of glutamine, carbonate, and phosphate donated by ATP, constituting the first step of 2 biosynthetic pathways, one leading to arginine and/or urea and the other to pyrimidine nucleotides. The large subunit (synthetase) binds the substrates ammonia (free or transferred from glutamine from the small subunit), hydrogencarbonate and ATP and carries out an ATP-coupled ligase reaction, activating hydrogencarbonate by forming carboxy phosphate which reacts with ammonia to form carbamoyl phosphate. The sequence is that of Carbamoyl phosphate synthase large chain from Thermotoga neapolitana (strain ATCC 49049 / DSM 4359 / NBRC 107923 / NS-E).